Here is a 332-residue protein sequence, read N- to C-terminus: Solute carrier family 25 member 16 (332 aa).

3 Solcar repeats span residues 34-120 (FYWL…YKTF), 128-216 (SGHV…LKSV), and 238-328 (LKTH…MKQF). The next 6 helical transmembrane spans lie at 37-57 (LRSFLAGGIAGCCAKTTVAPL), 88-108 (GYLGLYKGNGAMMIRIFPYGA), 134-154 (LMAGSMAGMTAVICTYPLDVV), 191-211 (GLMPTILGMAPYAGVSFFTFG), 244-264 (LLCGGVAGAIAQTISYPFDVT), and 299-319 (GLYRGLSLNYIRCIPSQAVAF).

The protein belongs to the mitochondrial carrier (TC 2.A.29) family.

It localises to the mitochondrion inner membrane. Its function is as follows. May be involved in the transport of coenzyme A in the mitochondrial matrix. Very little is known about the physiological function of this carrier. The sequence is that of Solute carrier family 25 member 16 from Mus musculus (Mouse).